The following is a 347-amino-acid chain: MTTLNLSIFPSVKISSSASIPGFIKIQPFLLRRKLSTVLSVTARDEGIIHNHFDFTSYMIGKANAVNEALDSAVSLREPIKIHEAIRYSLLARGKRVRPVLCIAACELVGGEESVALPAACAVEMIHTMSLIHDDLPCMDNDDLRRGKPTNHKVFGEDVAVLAGDALISFAFEHLATSTAVSPARVVRAIGELAKAIGSKGLVAGQVVDLTSGGMDQNDVGLEVLEFIHVHKTAVLLEAATVLGAIVGGGSDEEVEKLRRFARCIGLLFQVVDDILDVTKSSEELGKTAGKDLIADKLTYPKLMGLEKSKDFADKLLSDAHEQLHGFDSSRVKPLLALANYIAKRQN.

A chloroplast-targeting transit peptide spans 1 to 39 (MTTLNLSIFPSVKISSSASIPGFIKIQPFLLRRKLSTVL). The isopentenyl diphosphate site is built by Lys95, Arg98, and His127. Mg(2+) is bound by residues Asp134 and Asp140. Arg145 lines the dimethylallyl diphosphate pocket. Arg146 contacts isopentenyl diphosphate. Lys232, Thr233, Gln270, Lys287, and Lys297 together coordinate dimethylallyl diphosphate.

Belongs to the FPP/GGPP synthase family. Monomer. Mg(2+) serves as cofactor.

Its subcellular location is the plastid. It is found in the chloroplast. The enzyme catalyses isopentenyl diphosphate + dimethylallyl diphosphate = (2E)-geranyl diphosphate + diphosphate. It catalyses the reaction isopentenyl diphosphate + (2E)-geranyl diphosphate = (2E,6E)-farnesyl diphosphate + diphosphate. It carries out the reaction isopentenyl diphosphate + (2E,6E)-farnesyl diphosphate = (2E,6E,10E)-geranylgeranyl diphosphate + diphosphate. Its pathway is isoprenoid biosynthesis; farnesyl diphosphate biosynthesis; farnesyl diphosphate from geranyl diphosphate and isopentenyl diphosphate: step 1/1. The protein operates within isoprenoid biosynthesis; geranyl diphosphate biosynthesis; geranyl diphosphate from dimethylallyl diphosphate and isopentenyl diphosphate: step 1/1. It functions in the pathway isoprenoid biosynthesis; geranylgeranyl diphosphate biosynthesis; geranylgeranyl diphosphate from farnesyl diphosphate and isopentenyl diphosphate: step 1/1. Functionally, catalyzes the trans-addition of the three molecules of IPP onto DMAPP to form geranylgeranyl pyrophosphate. The protein is Geranylgeranyl pyrophosphate synthase 7, chloroplastic of Arabidopsis thaliana (Mouse-ear cress).